The chain runs to 60 residues: Large ribosomal subunit protein bL32A (60 aa).

The segment covering 1 to 19 has biased composition (basic residues); sequence MAVPKRRMSRSNTRSRRSQ. Residues 1–21 are disordered; that stretch reads MAVPKRRMSRSNTRSRRSQWK.

This sequence belongs to the bacterial ribosomal protein bL32 family.

This Nocardia farcinica (strain IFM 10152) protein is Large ribosomal subunit protein bL32A.